A 329-amino-acid chain; its full sequence is UPF0725 protein EMB2204 (329 aa).

Belongs to the UPF0725 (EMB2204) family.

In terms of biological role, may be involved in embryogenesis. The polypeptide is UPF0725 protein EMB2204 (EMB2204) (Arabidopsis thaliana (Mouse-ear cress)).